Here is a 90-residue protein sequence, read N- to C-terminus: Secretory calcium-binding phosphoprotein proline-glutamine-rich 1 (90 aa).

The first 15 residues, 1–15 (MQLFLLAALLSAAAA), serve as a signal peptide directing secretion.

As to expression, expressed in enamel organ.

Its subcellular location is the secreted. Tooth-associated epithelia protein that may participate in structuring the basal lamina at cell-tooth interface. The protein is Secretory calcium-binding phosphoprotein proline-glutamine-rich 1 of Mus musculus (Mouse).